The sequence spans 126 residues: UPF0102 protein TP_0913 (126 aa).

Belongs to the UPF0102 family.

The polypeptide is UPF0102 protein TP_0913 (Treponema pallidum (strain Nichols)).